Reading from the N-terminus, the 484-residue chain is tRNA sulfurtransferase (484 aa).

Residues 63 to 167 enclose the THUMP domain; that stretch reads ERLVEALKCI…NKDLFIVTQR (105 aa). Residues 185–186, K267, G289, and Q298 each bind ATP; that span reads LM. A disulfide bond links C346 and C458. In terms of domain architecture, Rhodanese spans 406 to 484; that stretch reads IPENAVVVDI…GFKNVKVYRP (79 aa). C458 acts as the Cysteine persulfide intermediate in catalysis.

It belongs to the ThiI family.

Its subcellular location is the cytoplasm. The catalysed reaction is [ThiI sulfur-carrier protein]-S-sulfanyl-L-cysteine + a uridine in tRNA + 2 reduced [2Fe-2S]-[ferredoxin] + ATP + H(+) = [ThiI sulfur-carrier protein]-L-cysteine + a 4-thiouridine in tRNA + 2 oxidized [2Fe-2S]-[ferredoxin] + AMP + diphosphate. It carries out the reaction [ThiS sulfur-carrier protein]-C-terminal Gly-Gly-AMP + S-sulfanyl-L-cysteinyl-[cysteine desulfurase] + AH2 = [ThiS sulfur-carrier protein]-C-terminal-Gly-aminoethanethioate + L-cysteinyl-[cysteine desulfurase] + A + AMP + 2 H(+). The protein operates within cofactor biosynthesis; thiamine diphosphate biosynthesis. Functionally, catalyzes the ATP-dependent transfer of a sulfur to tRNA to produce 4-thiouridine in position 8 of tRNAs, which functions as a near-UV photosensor. Also catalyzes the transfer of sulfur to the sulfur carrier protein ThiS, forming ThiS-thiocarboxylate. This is a step in the synthesis of thiazole, in the thiamine biosynthesis pathway. The sulfur is donated as persulfide by IscS. This is tRNA sulfurtransferase from Colwellia psychrerythraea (strain 34H / ATCC BAA-681) (Vibrio psychroerythus).